Consider the following 40-residue polypeptide: Metallothionein-1 (40 aa).

Belongs to the metallothionein superfamily. Type 5 family.

Functionally, this protein binds cations of several transition elements. It is thought to be involved in detoxification processes. The chain is Metallothionein-1 (MtnA) from Drosophila ananassae (Fruit fly).